We begin with the raw amino-acid sequence, 179 residues long: Large ribosomal subunit protein uL6 (179 aa).

Belongs to the universal ribosomal protein uL6 family. In terms of assembly, part of the 50S ribosomal subunit.

This protein binds to the 23S rRNA, and is important in its secondary structure. It is located near the subunit interface in the base of the L7/L12 stalk, and near the tRNA binding site of the peptidyltransferase center. This is Large ribosomal subunit protein uL6 from Gloeothece citriformis (strain PCC 7424) (Cyanothece sp. (strain PCC 7424)).